Consider the following 317-residue polypeptide: Long form salivary protein D7L2 (317 aa).

An N-terminal signal peptide occupies residues 1 to 20; that stretch reads MYKLLVALHLILCTVSHVKT. 5 disulfide bridges follow: Cys-39–Cys-76, Cys-72–Cys-131, Cys-181–Cys-214, Cys-195–Cys-316, and Cys-255–Cys-266. Residues Trp-58 and Tyr-73 each contribute to the thromboxane A2 site. Serotonin-binding residues include Glu-182, Tyr-264, Asp-281, Asp-284, and Met-308.

This sequence belongs to the PBP/GOBP family. In terms of tissue distribution, female salivary gland.

The protein resides in the secreted. Functionally, modulates blood feeding of female mosquitoes on vertebrate species by binding and sequestering different mediators involved in the host response, such as biogenic amines and eicosanoids. Binds serotonin with high affinity. Binds tryptamine, octopamine, dopamine and noradrenaline with low affinity. Binds leukotriene C4, leukotriene D4, leukotriene E4 and U-46619, a stable analog of thromboxane A2. Does not bind leukotriene B4, adrenaline, histamine and ADP. Inhibits platelet aggregation induced by low concentrations of collagen and arachidonic acid but not by ADP or adrenaline. This is Long form salivary protein D7L2 from Anopheles darlingi (Mosquito).